Here is a 432-residue protein sequence, read N- to C-terminus: Calcium uptake protein 2, mitochondrial (432 aa).

The transit peptide at Met-1–Leu-22 directs the protein to the mitochondrion. The EF-hand 1 domain occupies Lys-169–Gln-204. Ca(2+)-binding residues include Asp-182, Asp-184, Asn-186, Met-188, Glu-190, and Glu-193. Ser-202 is modified (phosphoserine). An EF-hand 2; degenerate domain is found at Glu-224–Glu-259. In terms of domain architecture, EF-hand 3; degenerate spans Thr-290–Leu-325. The EF-hand 4 domain maps to Leu-359–Arg-394. 5 residues coordinate Ca(2+): Asp-372, Asp-374, Asp-376, Cys-378, and Glu-383.

Belongs to the MICU1 family. MICU2 subfamily. Heterodimer; disulfide-linked; heterodimerizes with MICU1. Component of the uniplex complex, composed of MCU, EMRE/SMDT1, MICU1 and MICU2 in a 4:4:1:1 stoichiometry.

The protein resides in the mitochondrion intermembrane space. It localises to the mitochondrion inner membrane. Its function is as follows. Calcium sensor of the mitochondrial calcium uniporter (MCU) channel, which senses calcium level via its EF-hand domains. MICU1 and MICU2 form a disulfide-linked heterodimer that stimulates and inhibits MCU activity, depending on the concentration of calcium. At low calcium levels, MICU1 occludes the pore of the MCU channel, preventing mitochondrial calcium uptake. At higher calcium levels, calcium-binding to MICU1 and MICU2 induces a conformational change that weakens MCU-MICU1 interactions and moves the MICU1-MICU2 heterodimer away from the pore, allowing calcium permeation through the MCU channel. The sequence is that of Calcium uptake protein 2, mitochondrial (Micu2) from Rattus norvegicus (Rat).